Here is a 201-residue protein sequence, read N- to C-terminus: Recombination protein RecR (201 aa).

The C4-type zinc finger occupies 60 to 75; it reads CSCCGNVDTIDPCTVC. The 96-residue stretch at 83–178 folds into the Toprim domain; the sequence is SMIIVVEDVS…KTTRLAHGVP (96 aa).

This sequence belongs to the RecR family.

In terms of biological role, may play a role in DNA repair. It seems to be involved in an RecBC-independent recombinational process of DNA repair. It may act with RecF and RecO. The polypeptide is Recombination protein RecR (Allorhizobium ampelinum (strain ATCC BAA-846 / DSM 112012 / S4) (Agrobacterium vitis (strain S4))).